The sequence spans 398 residues: UDP-N-acetylglucosamine--N-acetylmuramyl-(pentapeptide) pyrophosphoryl-undecaprenol N-acetylglucosamine transferase (398 aa).

UDP-N-acetyl-alpha-D-glucosamine contacts are provided by residues Thr11–Gly13, Asn124, Arg164, Ser192, and Gln318.

The protein belongs to the glycosyltransferase 28 family. MurG subfamily.

It is found in the cell membrane. It catalyses the reaction di-trans,octa-cis-undecaprenyl diphospho-N-acetyl-alpha-D-muramoyl-L-alanyl-D-glutamyl-meso-2,6-diaminopimeloyl-D-alanyl-D-alanine + UDP-N-acetyl-alpha-D-glucosamine = di-trans,octa-cis-undecaprenyl diphospho-[N-acetyl-alpha-D-glucosaminyl-(1-&gt;4)]-N-acetyl-alpha-D-muramoyl-L-alanyl-D-glutamyl-meso-2,6-diaminopimeloyl-D-alanyl-D-alanine + UDP + H(+). It functions in the pathway cell wall biogenesis; peptidoglycan biosynthesis. In terms of biological role, cell wall formation. Catalyzes the transfer of a GlcNAc subunit on undecaprenyl-pyrophosphoryl-MurNAc-pentapeptide (lipid intermediate I) to form undecaprenyl-pyrophosphoryl-MurNAc-(pentapeptide)GlcNAc (lipid intermediate II). In Deinococcus radiodurans (strain ATCC 13939 / DSM 20539 / JCM 16871 / CCUG 27074 / LMG 4051 / NBRC 15346 / NCIMB 9279 / VKM B-1422 / R1), this protein is UDP-N-acetylglucosamine--N-acetylmuramyl-(pentapeptide) pyrophosphoryl-undecaprenol N-acetylglucosamine transferase.